The primary structure comprises 369 residues: Flagellar P-ring protein 1 (369 aa).

The signal sequence occupies residues 1 to 23; that stretch reads MRKQSLVTLLMVLLSLVWLPASA.

This sequence belongs to the FlgI family. The basal body constitutes a major portion of the flagellar organelle and consists of four rings (L,P,S, and M) mounted on a central rod.

It is found in the periplasm. Its subcellular location is the bacterial flagellum basal body. Assembles around the rod to form the L-ring and probably protects the motor/basal body from shearing forces during rotation. The sequence is that of Flagellar P-ring protein 1 from Yersinia pseudotuberculosis serotype I (strain IP32953).